The chain runs to 459 residues: Ribulose bisphosphate carboxylase large chain (459 aa).

Lys-4 bears the N6,N6,N6-trimethyllysine mark. The substrate site is built by Asn-113 and Thr-163. Lys-165 (proton acceptor) is an active-site residue. Residue Lys-167 participates in substrate binding. Mg(2+)-binding residues include Lys-191, Asp-193, and Glu-194. An N6-carboxylysine modification is found at Lys-191. The Proton acceptor role is filled by His-284. Substrate-binding residues include Arg-285, His-317, and Ser-369.

This sequence belongs to the RuBisCO large chain family. Type I subfamily. Heterohexadecamer of 8 large chains and 8 small chains; disulfide-linked. The disulfide link is formed within the large subunit homodimers. Mg(2+) is required as a cofactor. The disulfide bond which can form in the large chain dimeric partners within the hexadecamer appears to be associated with oxidative stress and protein turnover.

Its subcellular location is the plastid. It is found in the chloroplast. It catalyses the reaction 2 (2R)-3-phosphoglycerate + 2 H(+) = D-ribulose 1,5-bisphosphate + CO2 + H2O. The catalysed reaction is D-ribulose 1,5-bisphosphate + O2 = 2-phosphoglycolate + (2R)-3-phosphoglycerate + 2 H(+). RuBisCO catalyzes two reactions: the carboxylation of D-ribulose 1,5-bisphosphate, the primary event in carbon dioxide fixation, as well as the oxidative fragmentation of the pentose substrate in the photorespiration process. Both reactions occur simultaneously and in competition at the same active site. In Ceratopetalum gummiferum (New South Wales Christmas bush), this protein is Ribulose bisphosphate carboxylase large chain.